A 1368-amino-acid polypeptide reads, in one-letter code: Kinesin-like protein KIF24 (1368 aa).

Residues 1 to 64 form the SAM domain; it reads MASWLYECLC…FQLIKIIKIM (64 aa). The disordered stretch occupies residues 89–112; that stretch reads ELRSGPRRQLNFDSPADNKDRNAS. Serine 102 and serine 112 each carry phosphoserine. One can recognise a Kinesin motor domain in the interval 223 to 546; sequence KIRVCVRKRP…LRYADRVKEL (324 aa). 313–320 is an ATP binding site; sequence GQTGAGKT. Serine 478 bears the Phosphoserine mark. An interaction with MPHOSPH9 region spans residues 478-709; it reads SLLALKECIR…STKCKKVQTV (232 aa). The span at 557–576 shows a compositional bias: polar residues; the sequence is TSRNRTSGNSSPKRIQSSPG. Disordered regions lie at residues 557–584 and 602–639; these read TSRN…DKCS and GSTR…SPSQ. The residue at position 584 (serine 584) is a Phosphoserine. Position 621 is a phosphothreonine; by NEK2 (threonine 621). Serine 622 carries the post-translational modification Phosphoserine; by NEK2. Serine 646 carries the post-translational modification Phosphoserine. 5 disordered regions span residues 651–670, 729–753, 792–849, 864–938, and 952–984; these read TVRS…PLCS, HRAE…WTNI, QYRP…NTLE, GPEK…LAEK, and RGGG…EEDG. A compositionally biased stretch (acidic residues) spans 819–830; that stretch reads QVEELDDSDFSE. Phosphoserine is present on residues serine 826 and serine 829. 2 stretches are compositionally biased toward polar residues: residues 839 to 849 and 871 to 881; these read QRATKQRNTLE and ERQQSLFSSPR. Basic and acidic residues predominate over residues 882 to 906; it reads TGDKKDLTKSWVDSRDPINHRRAAL. Serine 1012 is subject to Phosphoserine. Disordered stretches follow at residues 1054–1073 and 1086–1148; these read MSLL…QLVQ and GGPV…SREA. Over residues 1106 to 1119 the composition is skewed to polar residues; the sequence is SSATRHLWLSSSPP. Over residues 1138 to 1148 the composition is skewed to basic and acidic residues; that stretch reads HPADKLPSREA.

The protein belongs to the TRAFAC class myosin-kinesin ATPase superfamily. Kinesin family. Interacts with CCP110, CEP97, TALPID3. Interacts with MPHOSPH9.

The protein localises to the cytoplasm. Its subcellular location is the cytoskeleton. The protein resides in the microtubule organizing center. It localises to the centrosome. It is found in the centriole. Functionally, microtubule-dependent motor protein that acts as a negative regulator of ciliogenesis by mediating recruitment of CCP110 to mother centriole in cycling cells, leading to restrict nucleation of cilia at centrioles. Mediates depolymerization of microtubules of centriolar origin, possibly to suppress aberrant cilia formation. Following activation by NEK2 involved in disassembly of primary cilium during G2/M phase but does not disassemble fully formed ciliary axonemes. As cilium assembly and disassembly is proposed to coexist in a dynamic equilibrium may suppress nascent cilium assembly and, potentially, ciliar re-assembly in cells that have already disassembled their cilia ensuring the completion of cilium removal in the later stages of the cell cycle. Plays an important role in recruiting MPHOSPH9, a negative regulator of cilia formation to the distal end of mother centriole. In Homo sapiens (Human), this protein is Kinesin-like protein KIF24 (KIF24).